The chain runs to 226 residues: Charged multivesicular body protein 5 (226 aa).

A coiled-coil region spans residues 21 to 93; that stretch reads IAGVDARATN…NQSFNMEQAN (73 aa). The span at 188–198 shows a compositional bias: basic and acidic residues; sequence KAPEAPSREPG. The disordered stretch occupies residues 188 to 226; the sequence is KAPEAPSREPGADSIVPGKSTIETDEFGLPKIPTSLKTT. Residue S201 is modified to Phosphoserine. Position 226 is a phosphothreonine (T226).

It belongs to the SNF7 family. In terms of assembly, probable peripherally associated component of the endosomal sorting required for transport complex III (ESCRT-III).

It localises to the endosome membrane. Its function is as follows. Probable peripherally associated component of the endosomal sorting required for transport complex III (ESCRT-III) which is involved in multivesicular bodies (MVBs) formation and sorting of endosomal cargo proteins into MVBs. MVBs contain intraluminal vesicles (ILVs) that are generated by invagination and scission from the limiting membrane of the endosome and are delivered to lysosomes enabling degradation of membrane proteins. Specifically down-regulates Notch signaling activity in the germarium, probably by facilitating Notch endocytosis. The sequence is that of Charged multivesicular body protein 5 from Drosophila melanogaster (Fruit fly).